The chain runs to 163 residues: 16S rRNA aminocarboxypropyltransferase (163 aa).

4 residues coordinate S-adenosyl-L-methionine: threonine 18, isoleucine 66, leucine 87, and serine 106.

This sequence belongs to the TDD superfamily. TSR3 family.

It is found in the cytoplasm. The enzyme catalyses an N(1)-methylpseudouridine in rRNA + S-adenosyl-L-methionine = N(1)-methyl-N(3)-[(3S)-3-amino-3-carboxypropyl]pseudouridine in rRNA + S-methyl-5'-thioadenosine + H(+). In terms of biological role, aminocarboxypropyltransferase that catalyzes the aminocarboxypropyl transfer on pseudouridine corresponding to position 914 in M.jannaschii 16S rRNA. It constitutes the last step in biosynthesis of the hypermodified N1-methyl-N3-(3-amino-3-carboxypropyl) pseudouridine (m1acp3-Psi). This chain is 16S rRNA aminocarboxypropyltransferase, found in Thermoplasma acidophilum (strain ATCC 25905 / DSM 1728 / JCM 9062 / NBRC 15155 / AMRC-C165).